The chain runs to 152 residues: Transcriptional regulator MraZ (152 aa).

2 consecutive SpoVT-AbrB domains span residues I5–Q52 and A81–L124.

The protein belongs to the MraZ family. As to quaternary structure, forms oligomers.

It localises to the cytoplasm. It is found in the nucleoid. The sequence is that of Transcriptional regulator MraZ from Legionella pneumophila (strain Paris).